The following is a 450-amino-acid chain: Proline--tRNA ligase (450 aa).

Belongs to the class-II aminoacyl-tRNA synthetase family. ProS type 2 subfamily. As to quaternary structure, homodimer.

It localises to the cytoplasm. The catalysed reaction is tRNA(Pro) + L-proline + ATP = L-prolyl-tRNA(Pro) + AMP + diphosphate. Its function is as follows. Catalyzes the attachment of proline to tRNA(Pro) in a two-step reaction: proline is first activated by ATP to form Pro-AMP and then transferred to the acceptor end of tRNA(Pro). This chain is Proline--tRNA ligase, found in Paracoccus denitrificans (strain Pd 1222).